The primary structure comprises 88 residues: Large ribosomal subunit protein bL27 (88 aa).

The disordered stretch occupies residues 1–25 (MAHKKGASSSSNGRDSEAKRLGVKR).

It belongs to the bacterial ribosomal protein bL27 family.

The protein is Large ribosomal subunit protein bL27 of Corynebacterium diphtheriae (strain ATCC 700971 / NCTC 13129 / Biotype gravis).